The sequence spans 180 residues: MPSKAFETLPNIYLVGPMGAGKTTVGRHLAELLGREFLDSDHEIERKTGATIPWIFEKEGEVGFRTRETVVLNELTSRKALVLATGGGAITQAPNREFLKQRGIVVYLYTPVELQLQRTYRDKNRPLLQVENPEQKLRDLLKIRDPLYREVAHYTIETNQGAARDLAQKILQLILSNKLK.

19-24 (GAGKTT) is a binding site for ATP. T23 contributes to the Mg(2+) binding site. Residues D41, R65, and G87 each contribute to the substrate site. Residue R125 coordinates ATP. R144 is a substrate binding site.

It belongs to the shikimate kinase family. Monomer. Requires Mg(2+) as cofactor.

It localises to the cytoplasm. The enzyme catalyses shikimate + ATP = 3-phosphoshikimate + ADP + H(+). Its pathway is metabolic intermediate biosynthesis; chorismate biosynthesis; chorismate from D-erythrose 4-phosphate and phosphoenolpyruvate: step 5/7. Functionally, catalyzes the specific phosphorylation of the 3-hydroxyl group of shikimic acid using ATP as a cosubstrate. In Acinetobacter baumannii (strain SDF), this protein is Shikimate kinase.